The following is a 172-amino-acid chain: SsrA-binding protein (172 aa).

The protein belongs to the SmpB family.

It is found in the cytoplasm. Functionally, required for rescue of stalled ribosomes mediated by trans-translation. Binds to transfer-messenger RNA (tmRNA), required for stable association of tmRNA with ribosomes. tmRNA and SmpB together mimic tRNA shape, replacing the anticodon stem-loop with SmpB. tmRNA is encoded by the ssrA gene; the 2 termini fold to resemble tRNA(Ala) and it encodes a 'tag peptide', a short internal open reading frame. During trans-translation Ala-aminoacylated tmRNA acts like a tRNA, entering the A-site of stalled ribosomes, displacing the stalled mRNA. The ribosome then switches to translate the ORF on the tmRNA; the nascent peptide is terminated with the 'tag peptide' encoded by the tmRNA and targeted for degradation. The ribosome is freed to recommence translation, which seems to be the essential function of trans-translation. The polypeptide is SsrA-binding protein (Dehalococcoides mccartyi (strain ATCC BAA-2100 / JCM 16839 / KCTC 5957 / BAV1)).